The primary structure comprises 238 residues: Ribonuclease PH (238 aa).

Residues R86 and 124–126 (GTR) contribute to the phosphate site.

This sequence belongs to the RNase PH family. As to quaternary structure, homohexameric ring arranged as a trimer of dimers.

It carries out the reaction tRNA(n+1) + phosphate = tRNA(n) + a ribonucleoside 5'-diphosphate. Phosphorolytic 3'-5' exoribonuclease that plays an important role in tRNA 3'-end maturation. Removes nucleotide residues following the 3'-CCA terminus of tRNAs; can also add nucleotides to the ends of RNA molecules by using nucleoside diphosphates as substrates, but this may not be physiologically important. Probably plays a role in initiation of 16S rRNA degradation (leading to ribosome degradation) during starvation. The chain is Ribonuclease PH from Acinetobacter baylyi (strain ATCC 33305 / BD413 / ADP1).